The following is a 145-amino-acid chain: MSMAYEDYMRQLVQPMRDELVRAGFRELRTSEEVEQFMKQVEGTTFVFVNSVCGCAAGLARPAATQAVLRSEKKPDHLVTVFAGQDKEATAKMREYFVGYPPSSPSMALLKGKEVVHFIPREDIEFHSMEDVMENILAAFDKYCG.

It belongs to the bacilliredoxin family.

This chain is Bacilliredoxin GK1781, found in Geobacillus kaustophilus (strain HTA426).